The primary structure comprises 507 residues: Cuticlin-4 (507 aa).

The first 19 residues, 1 to 19, serve as a signal peptide directing secretion; it reads MFHFTRILAAFLLPTLCFC. Residues 20 to 471 lie on the Extracellular side of the membrane; it reads GYSTAPSSTV…KTCFSTSRMY (452 aa). The ZP domain maps to 42-280; that stretch reads VCETASISLL…YGCSNTQPQC (239 aa). The interval 292 to 350 is disordered; sequence KTTETAEPYPYDSHESGYPTRPANYPVASSRYPIPTTQAPASYPSSPAPPPPGADIDNG. Residues asparagine 374 and asparagine 408 are each glycosylated (N-linked (GlcNAc...) asparagine). Residues 472–492 traverse the membrane as a helical segment; that stretch reads FTLILLCLLFATTVVVFIVIV. Topologically, residues 493–507 are cytoplasmic; the sequence is QKQRQILAQTAFFKP.

It is found in the cell membrane. In terms of biological role, plays a role in alae formation and subsequent cuticle attachment in adults. This chain is Cuticlin-4, found in Caenorhabditis elegans.